Reading from the N-terminus, the 207-residue chain is Large ribosomal subunit protein uL4 (207 aa).

Residues 44–81 are disordered; sequence KRQGTQSAKTRSEVRGGGRKPWRQKGTGRARQGSIRSP. Residues 60–71 are compositionally biased toward basic residues; sequence GGRKPWRQKGTG.

Belongs to the universal ribosomal protein uL4 family. As to quaternary structure, part of the 50S ribosomal subunit.

In terms of biological role, one of the primary rRNA binding proteins, this protein initially binds near the 5'-end of the 23S rRNA. It is important during the early stages of 50S assembly. It makes multiple contacts with different domains of the 23S rRNA in the assembled 50S subunit and ribosome. Functionally, forms part of the polypeptide exit tunnel. In Finegoldia magna (strain ATCC 29328 / DSM 20472 / WAL 2508) (Peptostreptococcus magnus), this protein is Large ribosomal subunit protein uL4.